The sequence spans 528 residues: Probable histone-arginine methyltransferase 1.4 (528 aa).

M1 carries the N-acetylmethionine modification. Residues 144–459 (EAASAKMYFH…QSYTINLTLS (316 aa)) form the SAM-dependent MTase PRMT-type domain. Residues Q161, R170, G194, E216, and E246 each contribute to the S-adenosyl-L-methionine site. Active-site residues include E260 and E269. Residue T274 participates in S-adenosyl-L-methionine binding.

This sequence belongs to the class I-like SAM-binding methyltransferase superfamily. Protein arginine N-methyltransferase family.

The protein resides in the nucleus. Its subcellular location is the cytoplasm. The catalysed reaction is L-arginyl-[protein] + 2 S-adenosyl-L-methionine = N(omega),N(omega)-dimethyl-L-arginyl-[protein] + 2 S-adenosyl-L-homocysteine + 2 H(+). Its function is as follows. Methylates (mono- and asymmetric dimethylation) the guanidino nitrogens of arginyl residues in several proteins involved in DNA packaging, transcription regulation, and mRNA stability. Recruited to promoters upon gene activation, methylates histone H3 and activates transcription via chromatin remodeling. The protein is Probable histone-arginine methyltransferase 1.4 (PRMT14) of Arabidopsis thaliana (Mouse-ear cress).